The following is a 428-amino-acid chain: Adenylosuccinate synthetase (428 aa).

GTP contacts are provided by residues 12 to 18 (GDEGKGK) and 40 to 42 (GHT). D13 functions as the Proton acceptor in the catalytic mechanism. Residues D13 and G40 each coordinate Mg(2+). Residues 13–16 (DEGK), 38–41 (NAGH), T128, R142, Q223, T238, and R302 each bind IMP. Residue H41 is the Proton donor of the active site. Residue 298–304 (VTTGRPR) coordinates substrate. GTP is bound by residues R304, 330-332 (KLD), and 412-414 (GTG).

This sequence belongs to the adenylosuccinate synthetase family. In terms of assembly, homodimer. Mg(2+) is required as a cofactor.

The protein localises to the cytoplasm. The enzyme catalyses IMP + L-aspartate + GTP = N(6)-(1,2-dicarboxyethyl)-AMP + GDP + phosphate + 2 H(+). Its pathway is purine metabolism; AMP biosynthesis via de novo pathway; AMP from IMP: step 1/2. Its function is as follows. Plays an important role in the de novo pathway of purine nucleotide biosynthesis. Catalyzes the first committed step in the biosynthesis of AMP from IMP. The sequence is that of Adenylosuccinate synthetase from Bifidobacterium adolescentis (strain ATCC 15703 / DSM 20083 / NCTC 11814 / E194a).